The sequence spans 277 residues: MKYFTIATVLTLASSALAAIRDVQLFAQSSNEEINNLGLISRREGAGVNYLFLASGAETLKFDDETFTIFSELQTGSTTARQSLVVSGGVVQLSVSGQPLHVEIAEDGSVKFAGSDSVAAAKNINDPYNYSKDSFAVVTNGGEGSIPFKIIAKFIGGGKSSSVTKHTEAPTTSPVYSNKTVTVFTTYCPESTTITLTICSEVCTPTVIETSGSVTVSSVLPSSSTEAPPKTSVAAPSTTAEAQTTAPVTSYEGGANEIVGGGSMAIALAAAAIGLVI.

The signal sequence occupies residues 1-18 (MKYFTIATVLTLASSALA). Asn-129 and Asn-178 each carry an N-linked (GlcNAc...) asparagine glycan. The interval 219 to 246 (VLPSSSTEAPPKTSVAAPSTTAEAQTTA) is disordered. Polar residues predominate over residues 234–246 (AAPSTTAEAQTTA). The GPI-anchor amidated glycine moiety is linked to residue Gly-253. Residues 254-277 (GANEIVGGGSMAIALAAAAIGLVI) constitute a propeptide, removed in mature form.

It belongs to the SRP1/TIP1 family. In terms of processing, the GPI-anchor is attached to the protein in the endoplasmic reticulum and serves to target the protein to the cell surface. There, the glucosamine-inositol phospholipid moiety is cleaved off and the GPI-modified mannoprotein is covalently attached via its lipidless GPI glycan remnant to the 1,6-beta-glucan of the outer cell wall layer.

It localises to the secreted. The protein localises to the cell wall. It is found in the membrane. Functionally, component of the cell wall involved in virulence which plays a role in the relationship between C.albicans and the host. This is Cell wall protein PGA30 (PGA30) from Candida albicans (strain SC5314 / ATCC MYA-2876) (Yeast).